We begin with the raw amino-acid sequence, 330 residues long: tRNA pseudouridine synthase B (330 aa).

The Nucleophile role is filled by Asp42.

Belongs to the pseudouridine synthase TruB family. Type 1 subfamily.

It catalyses the reaction uridine(55) in tRNA = pseudouridine(55) in tRNA. Its function is as follows. Responsible for synthesis of pseudouridine from uracil-55 in the psi GC loop of transfer RNAs. The chain is tRNA pseudouridine synthase B from Lactococcus lactis subsp. cremoris (strain MG1363).